The chain runs to 266 residues: U2 small nuclear ribonucleoprotein A' (266 aa).

LRR repeat units follow at residues 30–51, 53–74, 75–95, and 97–118; these read ILRNLGLEGDDIAMPASLNHLA, PTHILDLTNNDLVFFPDLHHRD, DIETLLLSKNRLMVLDAALLP, and KLKSLSLAFNGIENFETLIPLS. Positions 132–170 constitute an LRRCT domain; it reads NPICHLSEYRQRILALVPSLEVLDFKLVSQAEKAQAVKD.

This sequence belongs to the U2 small nuclear ribonucleoprotein A family. In terms of assembly, associated with the spliceosome.

It is found in the nucleus. In terms of biological role, involved in pre-mRNA splicing. The chain is U2 small nuclear ribonucleoprotein A' (LEA1) from Candida glabrata (strain ATCC 2001 / BCRC 20586 / JCM 3761 / NBRC 0622 / NRRL Y-65 / CBS 138) (Yeast).